Here is a 1119-residue protein sequence, read N- to C-terminus: Multiple epidermal growth factor-like domains protein 10 (1119 aa).

Positions 1–22 (MMSSCGPLLLAVSCCLVALTSS) are cleaved as a signal peptide. Residues 23-851 (LNLDDPNVCS…ALPMDSYQIG (829 aa)) are Extracellular-facing. Residues 27–104 (DPNVCSHWES…FYESGDICVP (78 aa)) form the EMI domain. 15 cysteine pairs are disulfide-bonded: C31–C92, C57–C66, C91–C102, C102–C115, C106–C121, C123–C132, C145–C157, C151–C164, C166–C175, C188–C200, C194–C207, C209–C218, C231–C243, C237–C250, and C252–C260. EGF-like domains lie at 98–133 (SGDI…ADCS), 141–176 (WGPH…WRCE), 184–219 (YGNN…AFCE), and 227–261 (HGQQ…MVCG). A glycan (N-linked (GlcNAc...) asparagine) is linked at N197. Residue N272 is glycosylated (N-linked (GlcNAc...) asparagine). EGF-like domains lie at 274 to 304 (SQEC…ERCQ) and 312 to 347 (YGIG…ESCE). Intrachain disulfides connect C277-C285, C279-C292, C294-C303, C316-C328, C322-C335, and C337-C346. N-linked (GlcNAc...) asparagine glycans are attached at residues N369 and N393. EGF-like domains are found at residues 401-436 (YGEA…SDCA), 444-479 (YGIN…VDCS), 487-522 (WGLG…DRCD), 573-608 (WGPN…TTCQ), 616-653 (FGHR…ALCN), 666-696 (GGSC…SDCS), 709-739 (IHTC…LYCT), 747-782 (YGKD…RHCE), and 795-825 (RQVC…TRCD). 3 disulfide bridges follow: C405–C417, C411–C424, and C426–C435. N-linked (GlcNAc...) asparagine glycosylation occurs at N447. Intrachain disulfides connect C448/C460, C454/C467, C469/C478, C491/C503, C497/C510, and C512/C521. A glycan (N-linked (GlcNAc...) asparagine) is linked at N492. The N-linked (GlcNAc...) asparagine glycan is linked to N576. Cystine bridges form between C577–C589, C583–C596, C598–C607, C620–C634, C624–C641, C643–C652, C669–C677, C671–C684, C686–C695, C712–C720, C714–C727, C729–C738, C751–C763, C757–C770, C772–C781, C798–C806, C800–C813, and C815–C824. An N-linked (GlcNAc...) asparagine glycan is attached at N674. A glycan (N-linked (GlcNAc...) asparagine) is linked at N803. A helical membrane pass occupies residues 852–872 (AITGIIILVLLVLILLLLFII). The Cytoplasmic portion of the chain corresponds to 873–1119 (YRKKQKGKES…SSPSPTEDSK (247 aa)).

It belongs to the MEGF family.

Its subcellular location is the cell membrane. Functionally, membrane receptor involved in phagocytosis by macrophages and astrocytes of apoptotic cells. Essential factor in the regulation of muscle development including myogenesis. Likely plays a key role in muscle cell proliferation, adhesion and motility. May control the balance between skeletal muscle satellite cells proliferation and differentiation through regulation of the notch signaling pathway. This is Multiple epidermal growth factor-like domains protein 10 from Danio rerio (Zebrafish).